The following is a 427-amino-acid chain: uncharacterized protein (427 aa).

Positions 135–168 (PILKQKLVSLESKVKKIDKEMEKHNDLLKEIQEN) form a coiled coil.

This is an uncharacterized protein from Arabidopsis thaliana (Mouse-ear cress).